The chain runs to 143 residues: UPF0201 protein Tneu_0685 (143 aa).

It belongs to the UPF0201 family.

In Pyrobaculum neutrophilum (strain DSM 2338 / JCM 9278 / NBRC 100436 / V24Sta) (Thermoproteus neutrophilus), this protein is UPF0201 protein Tneu_0685.